A 309-amino-acid chain; its full sequence is MKKLGTLLVLFLSAIILVACASGKKDTTSGQKLKVVATNSIIADITKNIAGDKIDLHSIVPIGQDPHEYEPLPEDVKKTSEADLIFYNGINLETGGNAWFTKLVENAKKTENKDYFAVSDGVDVIYLEGQNEKGKEDPHAWLNLENGIIFAKNIAKQLSAKDPNNKEFYEKNLKEYTDKLDKLDKESKDKFNKIPAEKKLIVTSEGAFKYFSKAYGVPSAYIWEINTEEEGTPEQIKTLVEKLRQTKVPSLFVESSVDDRPMKTVSQDTNIPIYAQIFTDSIAEQGKEGDSYYSMMKYNLDKIAEGLAK.

Positions 1–19 are cleaved as a signal peptide; the sequence is MKKLGTLLVLFLSAIILVA. C20 carries N-palmitoyl cysteine lipidation. The S-diacylglycerol cysteine moiety is linked to residue C20. Mn(2+) contacts are provided by H67, H139, E205, and D280.

It belongs to the bacterial solute-binding protein 9 family. Lipoprotein receptor antigen (Lrai) subfamily.

The protein localises to the cell membrane. Part of the ATP-binding cassette (ABC) transport system PsaABC involved in manganese import. Binds manganese with high affinity and specificity and delivers it to the membrane permease for translocation into the cytoplasm. Also acts as an adhesin which is involved on adherence to extracellular matrix. It is an important factor in pathogenesis and infection. This is Manganese ABC transporter substrate-binding lipoprotein PsaA (psaA) from Streptococcus pneumoniae serotype 4 (strain ATCC BAA-334 / TIGR4).